The primary structure comprises 169 residues: X polypeptide (169 aa).

The protein belongs to the IagB/IpgF/P19 family.

In Escherichia coli, this protein is X polypeptide (X).